The primary structure comprises 437 residues: Trigger factor (437 aa).

The PPIase FKBP-type domain maps to 161 to 246; it reads DDQVNIDFVG…VNSVSAPVLP (86 aa).

This sequence belongs to the FKBP-type PPIase family. Tig subfamily.

It is found in the cytoplasm. It catalyses the reaction [protein]-peptidylproline (omega=180) = [protein]-peptidylproline (omega=0). Involved in protein export. Acts as a chaperone by maintaining the newly synthesized protein in an open conformation. Functions as a peptidyl-prolyl cis-trans isomerase. This is Trigger factor from Pseudomonas putida (strain ATCC 700007 / DSM 6899 / JCM 31910 / BCRC 17059 / LMG 24140 / F1).